The sequence spans 420 residues: UDP-N-acetylglucosamine 1-carboxyvinyltransferase (420 aa).

22-23 (KN) provides a ligand contact to phosphoenolpyruvate. Arg93 serves as a coordination point for UDP-N-acetyl-alpha-D-glucosamine. Cys117 serves as the catalytic Proton donor. A 2-(S-cysteinyl)pyruvic acid O-phosphothioketal modification is found at Cys117. The UDP-N-acetyl-alpha-D-glucosamine site is built by Asp307 and Val329.

It belongs to the EPSP synthase family. MurA subfamily.

The protein resides in the cytoplasm. The enzyme catalyses phosphoenolpyruvate + UDP-N-acetyl-alpha-D-glucosamine = UDP-N-acetyl-3-O-(1-carboxyvinyl)-alpha-D-glucosamine + phosphate. It participates in cell wall biogenesis; peptidoglycan biosynthesis. Cell wall formation. Adds enolpyruvyl to UDP-N-acetylglucosamine. This chain is UDP-N-acetylglucosamine 1-carboxyvinyltransferase, found in Marinobacter nauticus (strain ATCC 700491 / DSM 11845 / VT8) (Marinobacter aquaeolei).